The chain runs to 462 residues: Ribosomal oxygenase 2 (462 aa).

Residues Met1–Glu24 form a disordered region. A JmjC domain is found at Gln139–Thr271. The Fe cation site is built by His179, Asp181, and His240. Position 308 is a phosphoserine (Ser308).

This sequence belongs to the ROX family. MINA53 subfamily. It depends on Fe(2+) as a cofactor.

Its subcellular location is the nucleus. It is found in the nucleolus. It catalyses the reaction L-histidyl-[ribosomal protein uL15] + 2-oxoglutarate + O2 = (3S)-3-hydroxy-L-histidyl-[ribosomal protein uL15] + succinate + CO2. The catalysed reaction is L-histidyl-[protein] + 2-oxoglutarate + O2 = (3S)-3-hydroxy-L-histidyl-[protein] + succinate + CO2. Functionally, oxygenase that can act as both a histone lysine demethylase and a ribosomal histidine hydroxylase. Is involved in the demethylation of trimethylated 'Lys-9' on histone H3 (H3K9me3), leading to an increase in ribosomal RNA expression. Also catalyzes the hydroxylation of 60S ribosomal protein L27a on 'His-39'. May play an important role in cell growth and survival. May be involved in ribosome biogenesis, most likely during the assembly process of pre-ribosomal particles. This Bos taurus (Bovine) protein is Ribosomal oxygenase 2 (RIOX2).